Reading from the N-terminus, the 714-residue chain is Hormonally up-regulated neu tumor-associated kinase (714 aa).

Positions 1-15 (MPAAAGDGLLGEPAA) are enriched in low complexity. Residues 1–26 (MPAAAGDGLLGEPAAPGGGGGAEDAA) form a disordered region. Residues 62–320 (LIGSRKLGEG…IQQALANRWL (259 aa)) form the Protein kinase domain. ATP is bound by residues 68–76 (LGEGSFAKV) and Lys91. Asp186 functions as the Proton acceptor in the catalytic mechanism. Positions 437–461 (KKPKEQEKRGDFLHRPFSKKLDKNL) are enriched in basic and acidic residues. Disordered regions lie at residues 437 to 471 (KKPK…SGSL), 518 to 552 (MEFI…HKED), and 590 to 660 (ARRN…VKSR). Residues 599 to 611 (LSPGLPSGSMSPL) are compositionally biased toward low complexity. A compositionally biased stretch (basic and acidic residues) spans 623–635 (AHEDKNSPPKEEG).

This sequence belongs to the protein kinase superfamily. CAMK Ser/Thr protein kinase family. SNF1 subfamily.

It catalyses the reaction L-seryl-[protein] + ATP = O-phospho-L-seryl-[protein] + ADP + H(+). The catalysed reaction is L-threonyl-[protein] + ATP = O-phospho-L-threonyl-[protein] + ADP + H(+). This Pan troglodytes (Chimpanzee) protein is Hormonally up-regulated neu tumor-associated kinase (HUNK).